Reading from the N-terminus, the 318-residue chain is Ribosomal RNA small subunit methyltransferase A (318 aa).

S-adenosyl-L-methionine is bound by residues Asn40, Val42, Gly67, Glu88, Asp118, and Asn137. The span at Ser295–Gly305 shows a compositional bias: basic and acidic residues. The tract at residues Ser295–Arg318 is disordered.

Belongs to the class I-like SAM-binding methyltransferase superfamily. rRNA adenine N(6)-methyltransferase family. RsmA subfamily.

Its subcellular location is the cytoplasm. The catalysed reaction is adenosine(1518)/adenosine(1519) in 16S rRNA + 4 S-adenosyl-L-methionine = N(6)-dimethyladenosine(1518)/N(6)-dimethyladenosine(1519) in 16S rRNA + 4 S-adenosyl-L-homocysteine + 4 H(+). Its function is as follows. Specifically dimethylates two adjacent adenosines (A1518 and A1519) in the loop of a conserved hairpin near the 3'-end of 16S rRNA in the 30S particle. May play a critical role in biogenesis of 30S subunits. This Mycolicibacterium paratuberculosis (strain ATCC BAA-968 / K-10) (Mycobacterium paratuberculosis) protein is Ribosomal RNA small subunit methyltransferase A.